The following is a 207-amino-acid chain: Suppressor of IKBKE 1 (207 aa).

Coiled-coil stretches lie at residues 70–102 and 162–193; these read HILLSQENTQIRDLQQENRELWISLEEHQDALE and QFCKIQEKLAQLELENKELRELLSISSESLQA.

Belongs to the SIKE family. In terms of assembly, interacts with IKBKE and TBK1 via its coiled coil region. Interaction with TBK1 is disrupted upon viral infection or TLR3 stimulation. Interacts with CDC42BPB. Interacts with SIKE1 which mediates association with the STRIPAK core complex composed of PP2A catalytic and scaffolding subunits, the striatins (PP2A regulatory subunits), the striatin-associated proteins MOB4, STRIP1 and STRIP2, PDCD10 and members of the STE20 kinases, such as STK24 and STK26. As to expression, widely expressed. Expressed in brain, heart, skeletal muscle, colon, thymus, spleen, kidney, liver, small intestine, placenta, lung and leukocytes. Present in all cell lines tested (at protein level).

It is found in the cytoplasm. Physiological suppressor of IKK-epsilon and TBK1 that plays an inhibitory role in virus- and TLR3-triggered IRF3. Inhibits TLR3-mediated activation of interferon-stimulated response elements (ISRE) and the IFN-beta promoter. May act by disrupting the interactions of IKBKE or TBK1 with TICAM1/TRIF, IRF3 and RIGI. Does not inhibit NF-kappa-B activation pathways. Associates with the striatin-interacting phosphatase and kinase (STRIPAK) core complex, forming the extended (SIKE1:SLMAP)STRIPAK complex. The (SIKE1:SLMAP)STRIPAK complex dephosphorylates STK3 leading to the inhibition of Hippo signaling and the control of cell growth. This chain is Suppressor of IKBKE 1, found in Homo sapiens (Human).